A 341-amino-acid chain; its full sequence is KH domain-containing RNA-binding protein QKI (341 aa).

The qua1 domain; involved in homodimerization stretch occupies residues 11–82 (PKPTPDYLMQ…PDAVGPIVQL (72 aa)). The KH domain maps to 87–153 (YVPVKEYPDF…WEHLNEDLHV (67 aa)). The tract at residues 182 to 213 (AAEGEDSLKKMQLMELAILNGTYRDANIKSPA) is qua2 domain; involved in RNA binding. The residue at position 188 (Ser188) is a Phosphoserine. Arg227 carries the post-translational modification Omega-N-methylarginine. Arg242 is modified (asymmetric dimethylarginine; by CARM1; alternate). The residue at position 242 (Arg242) is an Omega-N-methylarginine; alternate. Arg256 is modified (omega-N-methylarginine). Residues 276 to 279 (PPGP) carry the SH3-binding motif. A Nuclear localization signal motif is present at residues 324–330 (RVHPYQR).

This sequence belongs to the quaking family. As to quaternary structure, homodimer; does not require RNA to homodimerize. Able to heterodimerize with BICC1. Post-translationally, methylated by PRMT1. Tyrosine phosphorylated at its C-terminus, probably by FYN. Phosphorylation leads to decreased mRNA-binding affinity, affecting transport and/or stabilization of MBP mRNA. In terms of processing, ubiquitinated by RNF6 in macrophages, leading to its degradation.

The protein localises to the nucleus. It is found in the cytoplasm. In terms of biological role, RNA reader protein, which recognizes and binds specific RNAs, thereby regulating RNA metabolic processes, such as pre-mRNA splicing, circular RNA (circRNA) formation, mRNA export, mRNA stability and/or translation. Involved in various cellular processes, such as mRNA storage into stress granules, apoptosis, lipid deposition, interferon response, glial cell fate and development. Binds to the 5'-NACUAAY-N(1,20)-UAAY-3' RNA core sequence. Acts as a mRNA modification reader that specifically recognizes and binds mRNA transcripts modified by internal N(7)-methylguanine (m7G). Promotes the formation of circular RNAs (circRNAs) during the epithelial to mesenchymal transition and in cardiomyocytes: acts by binding to sites flanking circRNA-forming exons. CircRNAs are produced by back-splicing circularization of pre-mRNAs. Plays a central role in myelinization via 3 distinct mechanisms. First, acts by protecting and promoting stability of target mRNAs such as MBP, SIRT2 and CDKN1B, which promotes oligodendrocyte differentiation. Second, participates in mRNA transport by regulating the nuclear export of MBP mRNA. Finally, indirectly regulates mRNA splicing of MAG pre-mRNA during oligodendrocyte differentiation by acting as a negative regulator of MAG exon 12 alternative splicing: acts by binding to HNRNPA1 mRNA splicing factor, preventing its translation. Involved in microglia differentiation and remyelination by regulating microexon alternative splicing of the Rho GTPase pathway. Involved in macrophage differentiation: promotes monocyte differentiation by regulating pre-mRNA splicing in naive peripheral blood monocytes. Acts as an important regulator of muscle development: required for the contractile function of cardiomyocytes by regulating alternative splicing of cardiomyocyte transcripts. Acts as a negative regulator of thermogenesis by decreasing stability, nuclear export and translation of mRNAs encoding PPARGC1A and UCP1. Also required for visceral endoderm function and blood vessel development. May also play a role in smooth muscle development. In addition to its RNA-binding activity, also acts as a nuclear transcription coactivator for SREBF2/SREBP2. This is KH domain-containing RNA-binding protein QKI from Bos taurus (Bovine).